Here is a 1732-residue protein sequence, read N- to C-terminus: Transient receptor potential cation channel subfamily M member 3 (1732 aa).

Residues 1–894 (MPGPWGTVYF…RKIYEFYNAP (894 aa)) are Cytoplasmic-facing. Calmodulin-binding stretches follow at residues 41 to 64 (WTIR…QKSW), 192 to 215 (NFEL…MTTG), 300 to 323 (TGKY…QKIN), 601 to 624 (RKRF…KLLG), and 793 to 816 (RKNS…LEFK). The interval 617–625 (PKALKLLGM) is required for the inhibitory action of G-beta/gamma-subunits of heterotrimeric G-proteins. Residue S796 coordinates 1,2-dioctanoyl-sn-glycero-3-phospho-(1D-myo-inositol-4,5-bisphosphate). The tract at residues 829–851 (EIHLQEKEPEEPEKPTKEKDEED) is disordered. The span at 831-847 (HLQEKEPEEPEKPTKEK) shows a compositional bias: basic and acidic residues. The helical transmembrane segment at 895–918 (IVKFWFYTLAYIGYLMLFNYIVLV) threads the bilayer. At 919-925 (KMERWPS) the chain is on the extracellular side. Residues 926–948 (TQEWIVISYIFTLGIEKMREILM) traverse the membrane as a helical segment. Residues 949–964 (SEPGKLLQKVKVWLQE) are Cytoplasmic-facing. The chain crosses the membrane as a helical span at residues 965–985 (YWNVTDLIAILLFSVGMILRL). The Extracellular segment spans residues 986–989 (QDQP). A helical membrane pass occupies residues 990-1013 (FRSDGRVIYCVNIIYWYIRLLDIF). At 1014–1028 (GVNKYLGPYVMMIGK) the chain is on the cytoplasmic side. Residues K1017 and Y1018 each coordinate 1,2-dioctanoyl-sn-glycero-3-phospho-(1D-myo-inositol-4,5-bisphosphate). The chain crosses the membrane as a helical span at residues 1029–1056 (MMIDMMYFVIIMLVVLMSFGVARQAILF). The Extracellular portion of the chain corresponds to 1057–1073 (PNEEPSWKLAKNIFYMP). Positions 1074–1101 (YWMIYGEVFADQIDPPCGQNETREDGKT) form an intramembrane region, pore-forming. Over 1102–1111 (IQLPPCKTGA) the chain is Extracellular. A helical transmembrane segment spans residues 1112 to 1137 (WIVPAIMACYLLVANILLVNLLIAVF). Over 1138 to 1732 (NNTFFEVKSI…AFHSFESKHN (595 aa)) the chain is Cytoplasmic. The interval 1610-1732 (EREAELSHPS…AFHSFESKHN (123 aa)) is disordered. Composition is skewed to polar residues over residues 1635–1653 (PISS…NNIT) and 1690–1701 (NTASLRNPFQRS).

Belongs to the transient receptor (TC 1.A.4) family. LTrpC subfamily. TRPM3 sub-subfamily. In terms of assembly, homotetramer. Interacts with TRPM1; the interaction results in the formation of a heteromultimeric cation channel complex that are functionally different from the homomeric channels.

The protein resides in the cell membrane. It catalyses the reaction Ca(2+)(in) = Ca(2+)(out). The enzyme catalyses Mn(2+)(in) = Mn(2+)(out). The catalysed reaction is Zn(2+)(in) = Zn(2+)(out). It carries out the reaction Mg(2+)(in) = Mg(2+)(out). It catalyses the reaction Na(+)(in) = Na(+)(out). Activated by the neurosteroid pregnelonone sulfate (PregS). PregS activates the channel by shifting its current-voltage activation curve toward more negative membrane potentials and also potentiates temperature-induced activation. Activated by heat. Intracellular Ca(2+) inhibits TRPM3 probably via interaction with Ca(2+)/calmodulin. Intracellular Mg(2+) inhibits TRPM3 activity. Both intracellular and extracellular protons block TRPM3 through propable binding sites in the pore region. Positively regulated by phosphoinositide phosphoinositol 4,5-biphosphate (PI(4,5)P2). Strongly inhibited by activation of G(i)-coupled receptors via direct binding with G-beta/gamma-subunits of heterotrimeric G-proteins. With respect to regulation, insensitive to pregnenolone sulfate (PregS) or heat. Its activity is regulated as follows. Not inhibited by G-beta/gamma-subunits of heterotrimeric G-proteins. Constitutively active, non-selective divalent cation-conducting channel that is permeable to Ca(2+), Mn(2+), and Mg(2+), with a high permeability for Ca(2+). However, can be enhanced by increasing temperature and by ligands, including the endogenous neurosteroid pregnenolone sulfate and sphingosine-1 and suppressed by intracellular Mg(2+). Implicated in a variety of cellular processes, including insulin/peptide secretion, vascular constriction and dilation, noxious heat sensing, inflammatory and spontaneous pain sensitivity. In neurons of the dorsal root ganglia, functions as thermosensitive channel for the detection of noxious heat and spontaneous pain. Suggested to function as an ionotropic steroid receptor in beta-cell, indeed pregnenolone sulfate leads to Ca(2+) influx and enhanced insulin secretion. Mediates Zn(2+) uptake into the lumen of pancreatic beta cell secretory granules, thereby regulating insulin secretion. Forms heteromultimeric ion channels with TRPM1 which are permeable for Ca(2+) and Zn(2+) ions. Exists as multiple splice variants which differ significantly in their biophysical properties. Functionally, displays strongly reduced permeability for divalent cations and high selectivity toward monovalent cations. Its function is as follows. No channel activity. The polypeptide is Transient receptor potential cation channel subfamily M member 3 (Mus musculus (Mouse)).